The sequence spans 150 residues: MSLKNKFKNFFSLDDEEYEYEYIETDREEIPEEHESKDRTAYQSKAAGKQNVVSLQSVQKSSKVVLSEPRVYAEAQEIADHIKNRRAVVVNLQRIQHDQAKRIVDFLSGTVYALGGDIQRIGADIFLCTPENVDVSGTISELIEEEHQRW.

The segment at 26–45 (DREEIPEEHESKDRTAYQSK) is disordered.

This sequence belongs to the SepF family. As to quaternary structure, homodimer. Interacts with FtsZ.

The protein resides in the cytoplasm. Its function is as follows. Cell division protein that is part of the divisome complex and is recruited early to the Z-ring. Probably stimulates Z-ring formation, perhaps through the cross-linking of FtsZ protofilaments. Its function overlaps with FtsA. The chain is Cell division protein SepF from Bacillus licheniformis (strain ATCC 14580 / DSM 13 / JCM 2505 / CCUG 7422 / NBRC 12200 / NCIMB 9375 / NCTC 10341 / NRRL NRS-1264 / Gibson 46).